Consider the following 130-residue polypeptide: MAENQNYGTGRRKSSSARVFIKPGSGKITINQRDLDVYFGRETARMIVRQPLELVEMTEKLDLYVTVKGGGISGQAGAIRHGITRALIEYDESLRSVLRAAGFVTRDARQVERKKVGLRKARRRPQFSKR.

It belongs to the universal ribosomal protein uS9 family.

The sequence is that of Small ribosomal subunit protein uS9 from Pasteurella multocida (strain Pm70).